The sequence spans 66 residues: Phylloseptin-H8 (66 aa).

A signal peptide spans 1–22 (MAFLKKSLFLVLFLGLVSLSIC). Residues 23 to 44 (EEEKRETEEEENDQEEDDKSEE) constitute a propeptide that is removed on maturation. The disordered stretch occupies residues 25 to 44 (EKRETEEEENDQEEDDKSEE). A compositionally biased stretch (acidic residues) spans 30–41 (EEEENDQEEDDK). Residue Leu65 is modified to Leucine amide.

Expressed by the skin glands.

It localises to the secreted. Its function is as follows. Has antimicrobial activity. This Pithecopus hypochondrialis (Orange-legged leaf frog) protein is Phylloseptin-H8.